The primary structure comprises 284 residues: Efem/EfeO family lipoprotein (284 aa).

An N-terminal signal peptide occupies residues 1 to 17 (MKKLTTLLLASTLLIAA). The N-palmitoyl cysteine moiety is linked to residue C18. The S-diacylglycerol cysteine moiety is linked to residue C18.

This sequence belongs to the EfeM/EfeO family.

Its subcellular location is the cell membrane. This is Efem/EfeO family lipoprotein from Staphylococcus aureus (strain NCTC 8325 / PS 47).